Reading from the N-terminus, the 558-residue chain is Putative transport protein VC0395_A0715/VC395_1212 (558 aa).

The next 5 membrane-spanning stretches (helical) occupy residues 5-25 (VVLLLEQNPILLIFVVLAIGL), 37-57 (LGNSIGVLITSLIMGHLGFSF), 66-86 (FMLFIYCVGIEAGPNFFGIFF), 92-112 (YLILSLVVLITATWIAYFGGY), and 164-184 (VGYAMAYLIGLISMIMFAKLL). RCK C-terminal domains are found at residues 203-290 (RGLG…FRNG) and 291-374 (KEVF…KIGF). 6 consecutive transmembrane segments (helical) span residues 384 to 404 (LLAFCSFFILGILFGLVTMTF), 407 to 427 (VSFSLGNAVGLLLSGITLGFL), 441 to 461 (ALNMVKDLGLAIFMVGIGLNA), 476 to 496 (VIGLAFLVSVVPVVFAYLVGA), 504 to 524 (ALLFGAIIGARTCAPAMDVVN), and 537 to 557 (AGTYAIANILMTLTGTIFILL).

The protein belongs to the AAE transporter (TC 2.A.81) family. YbjL subfamily.

Its subcellular location is the cell membrane. The polypeptide is Putative transport protein VC0395_A0715/VC395_1212 (Vibrio cholerae serotype O1 (strain ATCC 39541 / Classical Ogawa 395 / O395)).